The following is a 395-amino-acid chain: Nuclear hormone receptor family member nhr-10 (395 aa).

A DNA-binding region (nuclear receptor) is located at residues Glu15–Gln90. 2 consecutive NR C4-type zinc fingers follow at residues Cys18–Cys38 and Cys54–Cys78. One can recognise an NR LBD domain in the interval Pro152–Ile392.

The protein belongs to the nuclear hormone receptor family.

It localises to the nucleus. Probable transcription factor that acts in a feed-forward loop with nhr-68 to activate genes involved in the vitamin B12-independent breakdown of the short-chain fatty acid propionate. This pathway is triggered in response to a diet low in vitamin B12, when canonical vitamin B12-dependent propionate breakdown cannot function; the resulting accumulation of propionate is probably sensed by nhr-10 and/or nhr-68. This chain is Nuclear hormone receptor family member nhr-10 (nhr-10), found in Caenorhabditis elegans.